The sequence spans 331 residues: Centriolar satellite-associated tubulin polyglutamylase complex regulator 1 (331 aa).

The required for interaction with PCM1 stretch occupies residues 1-111 (MLSPERLALP…HCLLQLLCPD (111 aa)). The segment at 1-225 (MLSPERLALP…SCPPPALVKE (225 aa)) is required for interaction with TPGS1, LRRC49, and TTLL1. The tract at residues 112 to 331 (FPLELTQKAA…STEETDESET (220 aa)) is required for interaction with TPGS2. The segment at 292 to 331 (SCLPSRTPPRVGSPWKPLHRSRKLDAESDGSTEETDESET) is disordered. The span at 318-331 (ESDGSTEETDESET) shows a compositional bias: acidic residues. S319 carries the post-translational modification Phosphoserine.

The protein belongs to the CSTPP1 family. Interacts with PCM1. Interacts with TTLL1, TPGS1, TPGS2 and LRRC49; the interactions link CSTPP1 to the complex TPGC. Binds to alpha-tubulin.

The protein resides in the cytoplasm. The protein localises to the cytoskeleton. It is found in the microtubule organizing center. It localises to the centrosome. Its subcellular location is the centriolar satellite. Regulator of the tubulin polyglutamylase complex (TPGC) that controls cytoskeletal organization, nuclear shape, and cilium disassembly by balancing microtubule and actin assembly. Regulates the assembly and stability of the TPGC and thereby modulates polyglutamylation of the microtubule, which antagonizes MAP4 binding. This Mus musculus (Mouse) protein is Centriolar satellite-associated tubulin polyglutamylase complex regulator 1.